The primary structure comprises 146 residues: Keratin-associated protein 12-2 (146 aa).

A run of 23 repeats spans residues 10–14 (CQPAC), 15–19 (CAPSP), 20–24 (CQPAC), 25–29 (CVPSS), 34–38 (CCVPV), 40–44 (CQSSV), 45–49 (CVPVS), 55–59 (CLPVS), 60–64 (CQSSV), 65–69 (CVPMS), 70–74 (FKSAV), 75–79 (CVPVS), 80–84 (CQSSV), 85–89 (CVPVS), 90–94 (CRPIV), 95–99 (CAAPS), 100–104 (CQSSL), 105–109 (CVPVS), 110–114 (CRPVV), 120–124 (CQSSG), 125–129 (CCQPS), 130–134 (CTSVL), and 135–139 (CRPIS). Residues 10-139 (CQPACCAPSP…CTSVLCRPIS (130 aa)) form a 23 X 5 AA approximate repeats region.

Belongs to the KRTAP type 12 family. As to quaternary structure, interacts with hair keratins. Restricted to a narrow region of the hair fiber cuticle, lying approximately 20 cell layers above the apex of the dermal papilla of the hair root; not detected in any other tissues.

Its function is as follows. In the hair cortex, hair keratin intermediate filaments are embedded in an interfilamentous matrix, consisting of hair keratin-associated proteins (KRTAP), which are essential for the formation of a rigid and resistant hair shaft through their extensive disulfide bond cross-linking with abundant cysteine residues of hair keratins. The matrix proteins include the high-sulfur and high-glycine-tyrosine keratins. In Homo sapiens (Human), this protein is Keratin-associated protein 12-2 (KRTAP12-2).